Consider the following 266-residue polypeptide: 2-Cys peroxiredoxin BAS1, chloroplastic (266 aa).

The span at 1-16 shows a compositional bias: low complexity; it reads MASVASSTTLISSPSS. The interval 1–25 is disordered; the sequence is MASVASSTTLISSPSSRVFPAKSSL. Residues 1-65 constitute a chloroplast transit peptide; sequence MASVASSTTL…SSTSRRSFAV (65 aa). In terms of domain architecture, Thioredoxin spans 73-232; that stretch reads PLVGNKAPDF…TMRTLQALQY (160 aa). C119 acts as the Cysteine sulfenic acid (-SOH) intermediate in catalysis.

It belongs to the peroxiredoxin family. AhpC/Prx1 subfamily. Homodimer; disulfide-linked, upon oxidation. Interacts with the plastidial thioredoxin CDSP32. Interacts with the plastidial NADPH-dependent thioredoxin reductase ANTR-C.

It localises to the plastid. It is found in the chloroplast. It carries out the reaction a hydroperoxide + [thioredoxin]-dithiol = an alcohol + [thioredoxin]-disulfide + H2O. Its function is as follows. Thiol-specific peroxidase that catalyzes the reduction of hydrogen peroxide and organic hydroperoxides to water and alcohols, respectively. Plays a role in cell protection against oxidative stress by detoxifying peroxides. May be an antioxidant enzyme particularly in the developing shoot and photosynthesizing leaf. This Arabidopsis thaliana (Mouse-ear cress) protein is 2-Cys peroxiredoxin BAS1, chloroplastic (BAS1).